The chain runs to 382 residues: PPE family protein PPE44 (382 aa).

It belongs to the mycobacterial PPE family.

It localises to the secreted. It is found in the cell wall. The protein localises to the cell surface. Virulence factor that modulates host innate immune response. In Mycobacterium tuberculosis (strain CDC 1551 / Oshkosh), this protein is PPE family protein PPE44.